Consider the following 552-residue polypeptide: MERFLRKYNISGDYANATRTFLAISPQWTCSHLKRNCLFNGMCVKQHFERAMIAATDAEEPAKAYKLVELAKEAMYDRETVWLQCFKSFSQPYEEDVEGKMKRCGAQLLEDYRKSGMMNEAVKQSALVNSERIRLDDSLSAMPYIYVPINDGQIVNPTFISRYRQIAYYFYNPDAADDWIDPNLFGIRGQHNQIKREVERQINTCPYTGYRGRVFQVMFLPIQLINFLRMDDFAKRFNRYASMAIQQYLRVGYAEEIRYVQQLFGRVPTGEFPLHQMMLMRRDLPTRDRSIVEARVRRSGDENWQSWLLPMIIIREGLDHQDRWEWFIDYMDRKHTCQLCYLKHSKQIPACSVIDVRASELTGCSPFKMVKIEEHVGNDSVFKTKLVRDEQIGRIGDHYYTTNCYTGAEALITTAIHIHRWIRGSGIWNDEGWQEGIFMLGRVLLRWELTKAQRSALLRLFCFVCYGYAPRADGTIPDWNNLGNFLDIILKGPELSEDEDERAYATMFEMVRCIITLCYAEKVHYAGFAAPACEGGEVINLAARMSQMWMEY.

It belongs to the orbivirus non-structural protein NS1 family.

In Antilocapra americana (Pronghorn), this protein is Non-structural protein NS1 (Segment-5).